We begin with the raw amino-acid sequence, 233 residues long: Probable septum site-determining protein MinC (233 aa).

It belongs to the MinC family. As to quaternary structure, interacts with MinD and FtsZ.

Functionally, cell division inhibitor that blocks the formation of polar Z ring septums. Rapidly oscillates between the poles of the cell to destabilize FtsZ filaments that have formed before they mature into polar Z rings. Prevents FtsZ polymerization. This chain is Probable septum site-determining protein MinC, found in Proteus mirabilis (strain HI4320).